The sequence spans 217 residues: tRNA (guanine-N(7)-)-methyltransferase (217 aa).

S-adenosyl-L-methionine-binding residues include E44, E69, D96, and D118. Residue D118 is part of the active site. Substrate-binding positions include K122, D154, and T191 to E194.

Belongs to the class I-like SAM-binding methyltransferase superfamily. TrmB family.

It carries out the reaction guanosine(46) in tRNA + S-adenosyl-L-methionine = N(7)-methylguanosine(46) in tRNA + S-adenosyl-L-homocysteine. The protein operates within tRNA modification; N(7)-methylguanine-tRNA biosynthesis. Functionally, catalyzes the formation of N(7)-methylguanine at position 46 (m7G46) in tRNA. This chain is tRNA (guanine-N(7)-)-methyltransferase, found in Bacillus thuringiensis (strain Al Hakam).